Consider the following 373-residue polypeptide: Zinc finger protein CONSTANS (373 aa).

The B box-type 1; atypical zinc finger occupies 15–57; it reads NRARPCDTCRSNACTVYCHADSAYLCMSCDAQVHSANRVASRH. Positions 20, 23, 43, 48, 63, 66, 86, and 91 each coordinate Zn(2+). The B box-type 2; atypical zinc finger occupies 58-108; it reads KRVRVCESCERAPAAFLCEADDASLCTACDSEVHSANPLARRHQRVPILPI. Over residues 109–120 the composition is skewed to polar residues; sequence SGNSFSSMTTTH. The disordered stretch occupies residues 109 to 130; it reads SGNSFSSMTTTHHQSEKTMTDP. Positions 121–130 are enriched in basic and acidic residues; that stretch reads HQSEKTMTDP. Positions 306 to 348 constitute a CCT domain; sequence REARVLRYREKRKTRKFEKTIRYASRKAYAEIRPRVNGRFAKR.

This sequence belongs to the CONSTANS family. As to quaternary structure, interacts with ADO3, SPA1, SPA2, SPA3 and SPA4. Interacts with MRG1 and MRG2 (via MRG domain). Interacts (via B-box) with MIP1A. Interacts with AS1 to form a functional complex regulating FT expression. Interacts with NFYC9. Component of a red light-dependent nuclear complex made of PHL, PHYB and CO. Interacts directly with PHL in the presence of PHYB. In terms of tissue distribution, expressed in leaves, shoots and shoot apical meristem. Detected in the vascular tissue of the hypocotyl, the cotyledons and the leaves. Restricted to the protoxylem and phloem in young inflorescence stems and to the phloem only in older inflorescences. Also detected in the vascular tissue of the root.

The protein localises to the nucleus. Functionally, transcription factor that acts in the long day flowering pathway and may mediate between the circadian clock and the control of flowering. Plays a role in the regulation of flowering time by acting on 'SUPPRESSOR OF OVEREXPRESSION OF CO1', 'TERMINAL FLOWER 1' and 'FLOWERING LOCUS T'. Also regulates P5CS2 and ACS10 (involved in proline and ethylene biosynthesis, respectively). Regulates the expression of NAKR1 by binding to the 5'-TGTG(N2-3)ATG-3' motif. This is Zinc finger protein CONSTANS from Arabidopsis thaliana (Mouse-ear cress).